Consider the following 423-residue polypeptide: Putative competence-damage inducible protein (423 aa).

The protein belongs to the CinA family.

This Streptococcus equi subsp. zooepidemicus (strain MGCS10565) protein is Putative competence-damage inducible protein.